The sequence spans 340 residues: Leucine-rich repeat-containing protein 23 (340 aa).

Residues 1–27 (MSDEDDVDDVDAEQDEVESDKEIEEWE) are compositionally biased toward acidic residues. The tract at residues 1-38 (MSDEDDVDDVDAEQDEVESDKEIEEWEDYRKETEEASE) is disordered. 6 LRR repeats span residues 89–110 (HLRY…NSLT), 111–134 (HLLW…PYLQ), 177–197 (SLHT…IYLP), 198–219 (KLKN…ENLS), 220–241 (NLTT…SQEM), and 243–264 (SLQY…AKLR). Residues 205 to 340 (AQNLLKKVEG…QDMEPYLPPV (136 aa)) form an interaction with RSPH9 region. The 39-residue stretch at 277–315 (NPCADETDYRQEALVQMAHLERLDKEFYEDDDRAEAEEI) folds into the LRRCT domain. Positions 305-328 (EDDDRAEAEEIRQRLKEEQDQDLD) form a coiled coil. The tract at residues 317 to 340 (QRLKEEQDQDLDPDQDMEPYLPPV) is disordered. A compositionally biased stretch (acidic residues) spans 323–333 (QDQDLDPDQDM).

In terms of assembly, component of the axonemal radial spoke complex. Interacts with RSPH3A and RSPH3B. Interacts with RSPH9. In terms of tissue distribution, expressed in the testis (at protein level).

The protein resides in the cytoplasm. It is found in the cytoskeleton. Its subcellular location is the flagellum axoneme. Its function is as follows. Essential for sperm motility and male fertility. Plays an important role in the proper assembly of the third radial spoke (RS3) head and the bridge structure between RS2 and RS3 in the sperm flagella. The chain is Leucine-rich repeat-containing protein 23 (Lrrc23) from Mus musculus (Mouse).